Consider the following 147-residue polypeptide: Phosphoribosyl-AMP cyclohydrolase (147 aa).

Asp-97 is a Mg(2+) binding site. Cys-98 lines the Zn(2+) pocket. Residues Asp-99 and Asp-101 each coordinate Mg(2+). Zn(2+)-binding residues include Cys-114 and Cys-121.

This sequence belongs to the PRA-CH family. In terms of assembly, homodimer. It depends on Mg(2+) as a cofactor. Zn(2+) serves as cofactor.

The protein localises to the cytoplasm. It carries out the reaction 1-(5-phospho-beta-D-ribosyl)-5'-AMP + H2O = 1-(5-phospho-beta-D-ribosyl)-5-[(5-phospho-beta-D-ribosylamino)methylideneamino]imidazole-4-carboxamide. The protein operates within amino-acid biosynthesis; L-histidine biosynthesis; L-histidine from 5-phospho-alpha-D-ribose 1-diphosphate: step 3/9. Catalyzes the hydrolysis of the adenine ring of phosphoribosyl-AMP. The chain is Phosphoribosyl-AMP cyclohydrolase from Hydrogenovibrio crunogenus (strain DSM 25203 / XCL-2) (Thiomicrospira crunogena).